The primary structure comprises 59 residues: Large ribosomal subunit protein bL32c (59 aa).

A disordered region spans residues S37 to K59.

This sequence belongs to the bacterial ribosomal protein bL32 family.

It is found in the plastid. Its subcellular location is the chloroplast. This is Large ribosomal subunit protein bL32c (rpl32) from Zea mays (Maize).